We begin with the raw amino-acid sequence, 377 residues long: Probable sensor histidine kinase HK (377 aa).

Disordered regions lie at residues 1 to 169 (MAHP…RPAD) and 346 to 377 (LPTP…TSDQ). The span at 10-54 (RLQRRHGARSGSSRCRHRRPVPRRRSRSRPRWRAARAHRRHHRRS) shows a compositional bias: basic residues. The segment covering 84–98 (RRPDPRGGANTDHHA) has biased composition (basic and acidic residues). Composition is skewed to basic residues over residues 99–115 (APRH…RRRD) and 137–146 (TTVRRRRQPR). The Histidine kinase domain occupies 146–350 (RITHPVGTAD…ELRITLPTPR (205 aa)). His149 is modified (phosphohistidine; by autocatalysis). The span at 352-377 (PFHEELPRITSSDTKDPNREHDTSDQ) shows a compositional bias: basic and acidic residues.

Autophosphorylated.

It carries out the reaction ATP + protein L-histidine = ADP + protein N-phospho-L-histidine.. Member of the two-component system HK/TcrA. Phosphorylates TcrA. In Mycobacterium tuberculosis (strain CDC 1551 / Oshkosh), this protein is Probable sensor histidine kinase HK.